The primary structure comprises 339 residues: AT-hook motif nuclear-localized protein 26 (339 aa).

Polar residues predominate over residues methionine 1–serine 12. Disordered stretches follow at residues methionine 1 to lysine 132 and methionine 273 to tyrosine 339. Over residues leucine 24 to phenylalanine 45 the composition is skewed to low complexity. Positions asparagine 82–serine 93 are enriched in polar residues. The span at glycine 102–glycine 113 shows a compositional bias: gly residues. The a.T hook DNA-binding region spans arginine 118–lysine 130. Residues alanine 142 to glycine 279 enclose the PPC domain. The segment covering glutamine 278–glycine 291 has biased composition (gly residues). Residues serine 292 to glycine 310 are compositionally biased toward low complexity.

The protein localises to the nucleus. In terms of biological role, transcription factor that specifically binds AT-rich DNA sequences related to the nuclear matrix attachment regions (MARs). The chain is AT-hook motif nuclear-localized protein 26 from Arabidopsis thaliana (Mouse-ear cress).